The following is a 111-amino-acid chain: Nucleoid-associated protein SynRCC307_0025 (111 aa).

This sequence belongs to the YbaB/EbfC family. In terms of assembly, homodimer.

The protein localises to the cytoplasm. Its subcellular location is the nucleoid. Functionally, binds to DNA and alters its conformation. May be involved in regulation of gene expression, nucleoid organization and DNA protection. The protein is Nucleoid-associated protein SynRCC307_0025 of Synechococcus sp. (strain RCC307).